A 95-amino-acid polypeptide reads, in one-letter code: CRISPR-associated endoribonuclease Cas2 1 (95 aa).

Asp8 is a Mg(2+) binding site.

Belongs to the CRISPR-associated endoribonuclease Cas2 protein family. In terms of assembly, homodimer, forms a heterotetramer with a Cas1 homodimer. Requires Mg(2+) as cofactor.

CRISPR (clustered regularly interspaced short palindromic repeat), is an adaptive immune system that provides protection against mobile genetic elements (viruses, transposable elements and conjugative plasmids). CRISPR clusters contain sequences complementary to antecedent mobile elements and target invading nucleic acids. CRISPR clusters are transcribed and processed into CRISPR RNA (crRNA). Functions as a ssRNA-specific endoribonuclease. Involved in the integration of spacer DNA into the CRISPR cassette. The protein is CRISPR-associated endoribonuclease Cas2 1 of Pyrobaculum aerophilum (strain ATCC 51768 / DSM 7523 / JCM 9630 / CIP 104966 / NBRC 100827 / IM2).